A 201-amino-acid polypeptide reads, in one-letter code: Transmembrane 4 L6 family member 18 (201 aa).

Over 1–9 the chain is Cytoplasmic; it reads MGSRKCGSC. A helical transmembrane segment spans residues 10-30; it reads LSSLLIPLALWSIIVNILLYF. Residues 31–49 lie on the Extracellular side of the membrane; that stretch reads PNGQASYASSNKLTNYVWY. Residues 50-70 form a helical membrane-spanning segment; that stretch reads FEGICFSGIMMLVVAAVLLVL. Over 71 to 93 the chain is Cytoplasmic; it reads ENDNNYKCCQSENCSKKYMTVLS. The chain crosses the membrane as a helical span at residues 94–114; it reads MIFSALGIAFSGYCLVISALG. The Extracellular portion of the chain corresponds to 115–157; that stretch reads LLQGPYCRTLDGWEYAFEGTAGRFLTDSREWIQCLEPAHVVEW. A helical transmembrane segment spans residues 158-178; sequence NIILFSILIALSGLQVIVCLI. The Cytoplasmic portion of the chain corresponds to 179 to 201; that stretch reads RVVIQLSKSLCGTYSVIIQPGII.

This sequence belongs to the L6 tetraspanin family.

It localises to the membrane. The polypeptide is Transmembrane 4 L6 family member 18 (TM4SF18) (Bos taurus (Bovine)).